The chain runs to 187 residues: Acetyl-CoA decarbonylase/synthase complex subunit epsilon (187 aa).

Met1 is subject to Blocked amino end (Met).

Belongs to the CdhB family. As to quaternary structure, heterotetramer of two alpha and two epsilon subunits. The ACDS complex is made up of alpha, epsilon, beta, gamma and delta subunits with a probable stoichiometry of (alpha(2)epsilon(2))(4)-beta(8)-(gamma(1)delta(1))(8).

Part of a complex that catalyzes the reversible cleavage of acetyl-CoA, allowing autotrophic growth from CO(2). The alpha-epsilon subcomponent functions as a carbon monoxide dehydrogenase. The precise role of the epsilon subunit is unclear; it may have a stabilizing role within the alpha(2)epsilon(2) component and/or be involved in electron transfer to FAD during a potential FAD-mediated CO oxidation. This is Acetyl-CoA decarbonylase/synthase complex subunit epsilon from Methanothrix soehngenii (Methanosaeta concilii).